The chain runs to 308 residues: Aliphatic nitrilase (308 aa).

The 267-residue stretch at 4 to 270 (FRAAVVQAAP…ETILTADLDT (267 aa)) folds into the CN hydrolase domain. The Proton acceptor role is filled by glutamate 44. Lysine 130 is an active-site residue. The active-site Nucleophile is cysteine 164.

Belongs to the carbon-nitrogen hydrolase superfamily. Nitrilase family.

The enzyme catalyses a nitrile + 2 H2O = a carboxylate + NH4(+). Nitrilase that hydrolyzes preferentially phenylacetonitrile, but not (R,S)-mandelonitrile. Also acts on dinitriles like phenylenediacetonitriles (PDAs) 1,2-PDA, 1,3-PDA, and 1,4-PDA, and cyanophenyl acetonitriles (CPAs) 2-CPA and 4-CPA, but with lower activities. This chain is Aliphatic nitrilase (nit), found in Sinorhizobium fredii (strain HH103).